The following is a 195-amino-acid chain: L-rhamnose-binding lectin CSL3 (195 aa).

SUEL-type lectin domains are found at residues 1–95 and 105–195; these read AISI…YSCV and ICEG…YTCD.

Its function is as follows. L-rhamnose binding lectin. Has hemagglutinating activity towards rabbit erythrocytes, human type A erythrocytes, human type B erythrocytes, human type O erythrocytes and sheep erythrocytes. Hemagglutinating activity is inhibited by smooth-type lipopolysaccharide (LPS) from S.flexneri 1A, A.salmonicida and E.coli K12, but not by rough-type LPS from S.flexneri, E.coli K12 and E.coli EH100. Agglutinates E.coli K12 and B.subtilis. In Oncorhynchus keta (Chum salmon), this protein is L-rhamnose-binding lectin CSL3.